The sequence spans 387 residues: MDLEVVEFPLHHKLALPFRIGLLVIVGTWLWSVCYHLIYILNRYQPISPNPRGSLNSKWYHLLQIPLSNRHTDLEENTEFKANLVSPVDFHAGYCFAAILSISWATGFILFLKKTQGDIGGLYSHPIYPLLWVITAFILIVFPFPWRYRSSQRGLRKSIIRVFLFFQADFRSPYKDFIVSEIFTSYAKALGDFYIFGCVLQGHISKFTLRPDLKCDGTFFVPLAMAYPFIVAILQCLHYGLSRRKHTFKINLLSALKHATALPVIYLSAIIHAKQTKFTLTSGHGYLFWLWILSALLSSAYTFLWDVFIDWRIRFPFHKSINHKRFPMFIYAIGCFINFILRVTWSMKLHPRLHQFHEYEMGIFSFEMLEILRRFLWLFFHLDAISS.

The next 8 helical transmembrane spans lie at 20–40 (IGLLVIVGTWLWSVCYHLIYI), 92–112 (AGYCFAAILSISWATGFILFL), 126–146 (PIYPLLWVITAFILIVFPFPW), 177–197 (FIVSEIFTSYAKALGDFYIFG), 217–237 (GTFFVPLAMAYPFIVAILQCL), 252–272 (LLSALKHATALPVIYLSAIIH), 285–305 (GYLFWLWILSALLSSAYTFLW), and 326–346 (FPMFIYAIGCFINFILRVTWS). Positions 212-387 (DLKCDGTFFV…LFFHLDAISS (176 aa)) constitute an EXS domain.

Belongs to the ERD1 family.

Its subcellular location is the membrane. The polypeptide is Protein ERD1 homolog 2 (Schizosaccharomyces pombe (strain 972 / ATCC 24843) (Fission yeast)).